Here is a 68-residue protein sequence, read N- to C-terminus: Large ribosomal subunit protein uL29 (68 aa).

It belongs to the universal ribosomal protein uL29 family.

The polypeptide is Large ribosomal subunit protein uL29 (Maricaulis maris (strain MCS10) (Caulobacter maris)).